Reading from the N-terminus, the 483-residue chain is Endoplasmic reticulum lectin 1 (483 aa).

The first 33 residues, 1-33 (MEEGDGGLRSLVPGGPLLLVLYGLLEASGGGRA), serve as a signal peptide directing secretion. MRH domains are found at residues 111–246 (SSCS…LCSH) and 342–469 (SYCF…ICKI). A disulfide bond links Cys113 and Cys126. Asn195 carries N-linked (GlcNAc...) asparagine glycosylation. Disulfide bonds link Cys199-Cys232, Cys215-Cys244, Cys344-Cys357, Cys421-Cys455, and Cys436-Cys467.

May form a complex with OS9, HSPA5, SYVN1, and SEL1L with which it interacts directly. Interacts (via PRKCSH 2 domain) with KREMEN2 (when glycosylated). Interacts with HSPA5. N-glycosylated.

The protein localises to the endoplasmic reticulum lumen. Functionally, probable lectin that binds selectively to improperly folded lumenal proteins. May function in endoplasmic reticulum quality control and endoplasmic reticulum-associated degradation (ERAD) of both non-glycosylated proteins and glycoproteins. The protein is Endoplasmic reticulum lectin 1 (Erlec1) of Mus musculus (Mouse).